The following is a 54-amino-acid chain: Large ribosomal subunit protein bL33A (54 aa).

This sequence belongs to the bacterial ribosomal protein bL33 family.

The sequence is that of Large ribosomal subunit protein bL33A from Streptomyces griseus subsp. griseus (strain JCM 4626 / CBS 651.72 / NBRC 13350 / KCC S-0626 / ISP 5235).